The chain runs to 217 residues: N-(5'-phosphoribosyl)anthranilate isomerase (217 aa).

Belongs to the TrpF family.

The enzyme catalyses N-(5-phospho-beta-D-ribosyl)anthranilate = 1-(2-carboxyphenylamino)-1-deoxy-D-ribulose 5-phosphate. Its pathway is amino-acid biosynthesis; L-tryptophan biosynthesis; L-tryptophan from chorismate: step 3/5. The sequence is that of N-(5'-phosphoribosyl)anthranilate isomerase from Chlorobium chlorochromatii (strain CaD3).